Reading from the N-terminus, the 350-residue chain is E3 ubiquitin-protein ligase TRIM63 (350 aa).

Residues 23–79 (CPICLEMFTKPVVILPCQHNLCRKCANDIFQAANPYWTNRGGSVSMSGGRFRCPSCR) form an RING-type zinc finger. Residues 74–218 (RCPSCRHEVI…LSQKFDTLYA (145 aa)) are interaction with TTN. A B box-type zinc finger spans residues 117 to 159 (GSHPMCKEHEDEKINIYCLTCEVPTCSLCKVFGAHQACEVAPL). Positions 122, 125, 145, and 151 each coordinate Zn(2+). Residues 207–269 (EELSQKFDTL…VETAIQSLDE (63 aa)) adopt a coiled-coil conformation. The COS domain maps to 267-325 (LDEPGGATFLSSAKQLIKSNVEASKGCQLGKTEQGFENMDYFTLDLEHIAEALRAIDFG). The segment covering 325–344 (GTDEEEEEFTEEEADEEEGV) has biased composition (acidic residues). Residues 325 to 350 (GTDEEEEEFTEEEADEEEGVTTEGHQ) form a disordered region.

As to quaternary structure, homodimer. Homooligomer and heterooligomer. Interacts with SUMO2, titin/TTN and GMEB1. Interacts with TRIM54 and probably with TRIM55. Interacts with TNNI3. Forms a ternary complex with RACK1 and PRKCE. Interacts with CKM.

The protein resides in the cytoplasm. Its subcellular location is the nucleus. It localises to the myofibril. The protein localises to the sarcomere. It is found in the m line. The protein resides in the z line. The catalysed reaction is S-ubiquitinyl-[E2 ubiquitin-conjugating enzyme]-L-cysteine + [acceptor protein]-L-lysine = [E2 ubiquitin-conjugating enzyme]-L-cysteine + N(6)-ubiquitinyl-[acceptor protein]-L-lysine.. The protein operates within protein modification; protein ubiquitination. E3 ubiquitin ligase. Mediates the ubiquitination and subsequent proteasomal degradation of CKM, GMEB1 and HIBADH. Regulates the proteasomal degradation of muscle proteins under amino acid starvation, where muscle protein is catabolized to provide other organs with amino acids. Inhibits de novo skeletal muscle protein synthesis under amino acid starvation. Regulates proteasomal degradation of cardiac troponin I/TNNI3 and probably of other sarcomeric-associated proteins. May play a role in striated muscle atrophy and hypertrophy by regulating an anti-hypertrophic PKC-mediated signaling pathway. May regulate the organization of myofibrils through TTN in muscle cells. This chain is E3 ubiquitin-protein ligase TRIM63 (Trim63), found in Mus musculus (Mouse).